We begin with the raw amino-acid sequence, 141 residues long: MKLDEFTIGQVFKTKSLKVSKDDIMRFAGEFDPQYMHVDEEKASKGRFNGIIASGIQTLAISFKLWIEEGFYGDDIIAGTEMNHMTFIKPVYPDDELFTIVEVLDKQPKRNELGILTVLLSTYNQKEVKVFEGELSVLIKR.

The MaoC-like domain maps to Ile-8–Glu-112.

This is an uncharacterized protein from Bacillus subtilis (strain 168).